The following is a 359-amino-acid chain: N-acetylneuraminate-9-phosphate synthase (359 aa).

An N6-acetyllysine mark is found at Lys-61, Lys-74, and Lys-79. Phosphoserine is present on Ser-275. Lys-290 is subject to N6-acetyllysine. The AFP-like domain occupies 294–353; the sequence is SVVAKVKIPAGTTLTLDMLTVKVGEPKGYPPEDIFNLAGKKVLVTIEEDDTVMEESVESH.

In terms of tissue distribution, ubiquitous.

The protein resides in the cytoplasm. The catalysed reaction is aldehydo-N-acetyl-D-mannosamine 6-phosphate + phosphoenolpyruvate + H2O = N-acetylneuraminate 9-phosphate + phosphate. Functionally, catalyzes condensation of phosphoenolpyruvate (PEP) and N-acetylmannosamine 6-phosphate (ManNAc-6-P) to synthesize N-acetylneuraminate-9-phosphate (Neu5Ac-9-P). Neu5Ac-9-P is the phosphorylated forms of sialic acid N-acetylneuraminic acid (Neu5Ac). In contrast with human ortholog, has no detectable activity towards D-mannose 6-phosphate. The protein is N-acetylneuraminate-9-phosphate synthase of Mus musculus (Mouse).